Here is a 478-residue protein sequence, read N- to C-terminus: MQIFNTLTGRKETFCPRDPGRVSIYVCGPTTYNFIHLGNARALVVFDTIRRYFLYKGYRVLYIQNFTDVDDKIINRSREEGIDPQTLAAKYVDEYFVDADALNVRRADVHPKVSDHIPEIIALITMIIDRGLAYVAGGDVYFAVRKFGGYGRLSKRSLDDLLAGARVEVGEQKRDPLDFALWKAAKPGEPWWESPWGRGRPGWHIECSAMALKYLGTGFDIHGGGADLIFPHHENEIAQSEGATGEPFARYWIHNGFITIREEKMSKSLGNVFLVRELTRLYPPEALRLFLLSNHYRNPLDYDPEAMEASVRAVNRLKTCLGLLRESLDRPAPDGDGGGGNRLEAVLEVLQGRFEAAMDDDFNTALAQAVMFDLTHEVNTYLHQNDRPSRGALQKALDLFDAFNRVLGIFPEHKGRIVLEAGAVSGDLSQGLLDLLIALRQDARRNKDFATADRIRDGLRALGILLEDTPQGVRWKKT.

Position 27 (Cys27) interacts with Zn(2+). The 'HIGH' region signature appears at 29 to 39; the sequence is PTTYNFIHLGN. Zn(2+) contacts are provided by Cys207, His232, and Glu236. Positions 264-268 match the 'KMSKS' region motif; that stretch reads KMSKS. ATP is bound at residue Lys267.

The protein belongs to the class-I aminoacyl-tRNA synthetase family. Monomer. Zn(2+) serves as cofactor.

The protein localises to the cytoplasm. It carries out the reaction tRNA(Cys) + L-cysteine + ATP = L-cysteinyl-tRNA(Cys) + AMP + diphosphate. The protein is Cysteine--tRNA ligase of Desulforudis audaxviator (strain MP104C).